The following is a 322-amino-acid chain: Acetylglutamate kinase (322 aa).

Residues 89 to 90 (GG), Arg-111, and Asn-217 each bind substrate.

It belongs to the acetylglutamate kinase family. ArgB subfamily.

The protein localises to the cytoplasm. It carries out the reaction N-acetyl-L-glutamate + ATP = N-acetyl-L-glutamyl 5-phosphate + ADP. Its pathway is amino-acid biosynthesis; L-arginine biosynthesis; N(2)-acetyl-L-ornithine from L-glutamate: step 2/4. Functionally, catalyzes the ATP-dependent phosphorylation of N-acetyl-L-glutamate. The polypeptide is Acetylglutamate kinase (Ehrlichia ruminantium (strain Welgevonden)).